The primary structure comprises 474 residues: Stabilizer of axonemal microtubules 1 (474 aa).

Mn regions lie at residues 30–64 (KPCL…KGSI), 65–97 (PMEG…PSEE), 98–131 (NMDL…PYSN), 132–165 (KMEY…PASV), 166–199 (RFDN…LCNI), 200–232 (PLED…PCEI), 233–266 (PFES…GLDM), 267–299 (PFSN…PPED), 300–332 (SMDL…RKSG), 333–366 (RFEG…FPTE), 367–400 (PLDC…RGNV), and 401–434 (PVEG…TFEE). The tract at residues 318–350 (PARSCRPAPQIRKSGRFEGSSTTKDDYKQWSSM) is disordered. The segment at 444–474 (KPVSQAGSQQSSHLSVDDSENPSQRKLEVSA) is disordered. The segment covering 448–457 (QAGSQQSSHL) has biased composition (polar residues).

The protein belongs to the FAM154 family. In terms of assembly, associates with microtubules via the Mn regions.

It localises to the cytoplasm. The protein localises to the cytoskeleton. It is found in the microtubule organizing center. The protein resides in the centrosome. Its subcellular location is the centriole. It localises to the cilium basal body. The protein localises to the cilium axoneme. It is found in the flagellum axoneme. May play a role in the regulation of cilium length. Stabilizes microtubules at low temperature. The chain is Stabilizer of axonemal microtubules 1 (SAXO1) from Macaca fascicularis (Crab-eating macaque).